Here is a 227-residue protein sequence, read N- to C-terminus: TMF-regulated nuclear protein 1 (227 aa).

2 disordered regions span residues 1–72 (MPGC…ELQR) and 200–227 (GRLRRGHGPEPDSPFRRSPPRGPASPQR). Residues 22 to 55 (SPPPPWDPMPSSQPPPPTPTLTPTPTPGQSPPLP) are compositionally biased toward pro residues.

In terms of assembly, interacts with TMF1; may regulate TRNP1 proteasomal degradation. In terms of processing, ubiquitinated, leading to its degradation by the proteasome.

Its subcellular location is the nucleus. In terms of biological role, DNA-binding factor that regulates the expression of a subset of genes and plays a key role in tangential, radial, and lateral expansion of the brain neocortex. Regulates neural stem cells proliferation and the production of intermediate neural progenitors and basal radial glial cells affecting the process of cerebral cortex gyrification. May control the proliferation rate of cells by regulating their progression through key cell-cycle transition points. This chain is TMF-regulated nuclear protein 1 (TRNP1), found in Homo sapiens (Human).